Consider the following 466-residue polypeptide: Cysteine--tRNA ligase (466 aa).

Residue Cys28 coordinates Zn(2+). A 'HIGH' region motif is present at residues 30–40 (PTVYNYIHIGN). 3 residues coordinate Zn(2+): Cys208, His233, and Glu237. Positions 265–269 (KMSKS) match the 'KMSKS' region motif. Residue Lys268 participates in ATP binding.

The protein belongs to the class-I aminoacyl-tRNA synthetase family. Monomer. Zn(2+) serves as cofactor.

It localises to the cytoplasm. The enzyme catalyses tRNA(Cys) + L-cysteine + ATP = L-cysteinyl-tRNA(Cys) + AMP + diphosphate. This chain is Cysteine--tRNA ligase, found in Staphylococcus aureus (strain MSSA476).